Reading from the N-terminus, the 68-residue chain is Large ribosomal subunit protein uL29 (68 aa).

Belongs to the universal ribosomal protein uL29 family.

This Geobacillus sp. (strain WCH70) protein is Large ribosomal subunit protein uL29.